The chain runs to 397 residues: Protein Rep52 (397 aa).

The SF3 helicase domain occupies 84 to 239 (DPQYAASVFL…LDHDFGKVTK (156 aa)). 110 to 117 (GPATTGKT) lines the ATP pocket. A disordered region spans residues 265–296 (GGAKKRPAPSDADISEPKRVRESVAQPSTSDA).

As to quaternary structure, homooligomer. Interacts with host PRKX.

The protein localises to the host nucleus. Its function is as follows. Plays a critical role during packaging of viral DNA into empty capsids, where they are thought to be part of the packaging motor complex. The single stranded genomic DNA is packaged in a 3' to 5' direction and requires the association between viral DNA and Rep40. Regulates host PKA activity by interacting with host PRKX as a mechanism to interfere with helper virus propagation and to promote its own replication. In Mammalia (AAV-2), this protein is Protein Rep52 (Rep52).